Here is a 237-residue protein sequence, read N- to C-terminus: Uridylate kinase (237 aa).

12–15 serves as a coordination point for ATP; it reads KLSG. An involved in allosteric activation by GTP region spans residues 20–25; it reads GENGFG. Gly54 lines the UMP pocket. Residues Gly55 and Arg59 each coordinate ATP. Residues Asp72 and 133 to 140 contribute to the UMP site; that span reads TGNPYFST. Tyr166 and Asp169 together coordinate ATP.

The protein belongs to the UMP kinase family. In terms of assembly, homohexamer.

It localises to the cytoplasm. It catalyses the reaction UMP + ATP = UDP + ADP. It participates in pyrimidine metabolism; CTP biosynthesis via de novo pathway; UDP from UMP (UMPK route): step 1/1. Allosterically activated by GTP. Inhibited by UTP. In terms of biological role, catalyzes the reversible phosphorylation of UMP to UDP. The sequence is that of Uridylate kinase from Clostridium perfringens (strain SM101 / Type A).